The primary structure comprises 225 residues: uncharacterized protein (225 aa).

Polar residues predominate over residues 1-19; sequence MKFNSISPNKQHHTGFTTS. Residues 1–21 form a disordered region; sequence MKFNSISPNKQHHTGFTTSNN.

This is an uncharacterized protein from Dictyostelium discoideum (Social amoeba).